Consider the following 705-residue polypeptide: MSTPSRPFRSPRRARWLVPVLLLLVWLVVGGALGPYAGKLGEVATNDQASFLPRSAESTRVVDAQQAFQQDETLPVIVVWTADGDGDAAVTAHQQAATRSVAGLEGDPGIVGPASPALPSDDGRALQAVVQVEPDLGERLPDVLADIGDAAGQVPGTRAQLAGPAASQADLSDAFAGIDGLLLAVALITVLVILLLVYRSVLLPLVIILSAVFALALSCAIVYALADRDVVRVDGQVQGILSILVIGAATDYALLLTARFREELARHPDRFGAVRAALRDSWGAVVASAATVALGLLALLLSDLTNNRALGPVGAIGIVCSVLSTLTFLPAVLVLLGRAAYWPAKPVRTGDPEAGHRLWHRVAALVDRAPRRIWALSLAALLACAAFAPTLSSKGVPLDEIFVNDTPSVAAQQTLAEHFPGGSGNPAVVIAEADRLDPVLRAARDTRGVASAAPVTDSGRPGAGTPLVVDGRVRIDATLEAPADSDAAKSTVVRLRAAVHEVSGADALVGGYTAQQYDTQETAAEDRTLIVPVVLAIILVILILLLRSLLMPVLLVATVALNFLATLGVSALVFTHVFGFSGTDASVPLYGFVFLVALGVDYNIFLMSRVREEALRHGVREGILRGLTATGGVITSAGVVLAATFAALGVIPLAFLLQIAFIVAFGVLLDTLVVRSLLVPALARDIGAVAWWPGRLGHRTPAGRD.

A run of 12 helical transmembrane segments spans residues 16-36, 177-197, 202-222, 237-257, 281-301, 316-336, 373-393, 529-549, 554-574, 587-607, 627-647, and 648-668; these read WLVPVLLLLVWLVVGGALGPY, GIDGLLLAVALITVLVILLLV, LLPLVIILSAVFALALSCAIV, VQGILSILVIGAATDYALLLT, SWGAVVASAATVALGLLALLL, IGIVCSVLSTLTFLPAVLVLL, IWALSLAALLACAAFAPTLSS, LIVPVVLAIILVILILLLRSL, LLVATVALNFLATLGVSALVF, VPLYGFVFLVALGVDYNIFLM, LTATGGVITSAGVVLAATFAA, and LGVIPLAFLLQIAFIVAFGVL.

The protein belongs to the resistance-nodulation-cell division (RND) (TC 2.A.6) family. MmpL subfamily.

It is found in the cell membrane. The polypeptide is Putative membrane protein SCO0839 (Streptomyces coelicolor (strain ATCC BAA-471 / A3(2) / M145)).